Here is a 414-residue protein sequence, read N- to C-terminus: MFDTVCTLPLSADLFSQAIHPNEPVVSVGLSTGHVQTFRLPSEESSDDDDGTASNSSARNGKGHIDTMWRTRRHKGSCRCLGFGVDGEMLYSAGTDGLVKAAKAETGVVENKIAIPLAKDGSVDAPTIIHALSPQTLLLATDSSALHLYDLRIPFSNVSAKPQQTHHPHDDYISSLTPLPPSDTSTSGFSKQWVTTGGTTLAVTDLRRGVMVRSEDQGEELVSSVYIGGLASSGTSRGEKVLVGGSSGVLTLWEKGAWDDQDERIYVQREAGGGEALETLAVVPDELGKGKMVAIGLGSGGVKFVRIGMNKVVSEVMHDETEGVIGLGFDVEGRMVSGGGQVVKVWHEAVGSNDMDVDMAGGKRMFGGDSDDSDDDNDSEDSEQEQRQPVEPQRKRKKNKGKGKRDIIAFADID.

5 WD repeats span residues 9–48 (PLSADLFSQAIHPNEPVVSVGLSTGHVQTFRLPSEESSDD), 73–112 (RHKGSCRCLGFGVDGEMLYSAGTDGLVKAAKAETGVVENK), 118–159 (AKDG…SNVS), 222–263 (VSSV…DQDE), and 319–356 (DETEGVIGLGFDVEGRMVSGGGQVVKVWHEAVGSNDMD). Residues 39-65 (RLPSEESSDDDDGTASNSSARNGKGHI) form a disordered region. Positions 357–414 (VDMAGGKRMFGGDSDDSDDDNDSEDSEQEQRQPVEPQRKRKKNKGKGKRDIIAFADID) are disordered. A compositionally biased stretch (acidic residues) spans 369–383 (DSDDSDDDNDSEDSE). Residues 394-403 (RKRKKNKGKG) are compositionally biased toward basic residues.

The protein belongs to the WD repeat WDR55 family.

Its subcellular location is the nucleus. It is found in the nucleolus. The chain is WD repeat-containing protein jip5 (jip5) from Aspergillus clavatus (strain ATCC 1007 / CBS 513.65 / DSM 816 / NCTC 3887 / NRRL 1 / QM 1276 / 107).